The following is a 54-amino-acid chain: Photosystem II reaction center protein L (54 aa).

A helical membrane pass occupies residues 33 to 53 (SLFWGLLLIFVLAVLFSSYIF).

The protein belongs to the PsbL family. PSII is composed of 1 copy each of membrane proteins PsbA, PsbB, PsbC, PsbD, PsbE, PsbF, PsbH, PsbI, PsbJ, PsbK, PsbL, PsbM, PsbT, PsbX, PsbY, PsbZ, Psb30/Ycf12, at least 3 peripheral proteins of the oxygen-evolving complex and a large number of cofactors. It forms dimeric complexes.

The protein localises to the plastid. It localises to the chloroplast thylakoid membrane. Functionally, one of the components of the core complex of photosystem II (PSII). PSII is a light-driven water:plastoquinone oxidoreductase that uses light energy to abstract electrons from H(2)O, generating O(2) and a proton gradient subsequently used for ATP formation. It consists of a core antenna complex that captures photons, and an electron transfer chain that converts photonic excitation into a charge separation. This subunit is found at the monomer-monomer interface and is required for correct PSII assembly and/or dimerization. The chain is Photosystem II reaction center protein L from Stigeoclonium helveticum (Green alga).